Consider the following 630-residue polypeptide: Pro-interleukin-16 (630 aa).

Disordered stretches follow at residues 30-268 (ENPG…FPLT) and 316-343 (PKEG…ASDT). Low complexity predominate over residues 129–143 (IRASSSSSIKQRISS). Residue Ser-220 is modified to Phosphoserine. Residues 321–343 (SPTSSSNEDSAANGSAETSASDT) are compositionally biased toward polar residues. Residues 404–500 (KQLDSIHVTI…IVTRKLTAES (97 aa)) form an interaction with PPP1R12A, PPP1R12B and PPP1R12C region. PDZ domains are found at residues 410 to 495 (HVTI…VTRK) and 532 to 617 (TVTL…IRRK).

Homotetramer. Pro-interleukin-16 interacts (via PDZ 2 domain) with PPP1R12A, PPP1R12B and PPP1R12C. Pro-interleukin-16 interacts with GRIN2A. Pro-interleukin-16 interacts with GABPB1. Pro-interleukin-16 interacts (via PDZ 3 domain) with HDAC3.

Its subcellular location is the secreted. It is found in the cytoplasm. The protein localises to the nucleus. In terms of biological role, interleukin-16 stimulates a migratory response in CD4+ lymphocytes, monocytes, and eosinophils. Primes CD4+ T-cells for IL-2 and IL-15 responsiveness. Also induces T-lymphocyte expression of interleukin 2 receptor. Ligand for CD4. Functionally, pro-interleukin-16 is involved in cell cycle progression in T-cells. Appears to be involved in transcriptional regulation of SKP2 and is probably part of a transcriptional repression complex on the core promoter of the SKP2 gene. May act as a scaffold for GABPB1 (the DNA-binding subunit the GABP transcription factor complex) and HDAC3 thus maintaining transcriptional repression and blocking cell cycle progression in resting T-cells. This chain is Pro-interleukin-16 (IL16), found in Macaca fascicularis (Crab-eating macaque).